The chain runs to 316 residues: MNTSITARELFEQQRERLGLRWAAGKSGEKRELEAGNTVSRRPSLAGYLNAIYPNKVQILGTEELSWLDALEPRQRWETIEKIMQSHPLALVLTRNQPCPEDLRAAADESGTPLWLSPKRGHELLNHLSYHLARTLAPRVILHGVFMEIYSIGVLITGEAGSGKSELALELLSRGHRLVADDAPEFTQIAPDVLDGTCPELLQDLLEVRGLGVLNVREMFGDTAVKKNKYLRLIVHLTKPMTEPTPHGYERLTGDSGTRHVLDLDVPLITLPVMPGRNLAVLTEAATRLHILRTKGIDPAAMFIARHSNLLERRTP.

Catalysis depends on residues H143 and K164. 158 to 165 provides a ligand contact to ATP; the sequence is GEAGSGKS. S165 lines the Mg(2+) pocket. D182 functions as the Proton acceptor; for phosphorylation activity. Proton donor; for dephosphorylation activity in the catalytic mechanism. Residues 206–215 form an important for the catalytic mechanism of both phosphorylation and dephosphorylation region; the sequence is LEVRGLGVLN. E207 contacts Mg(2+). R251 is an active-site residue. Positions 272-277 are important for the catalytic mechanism of dephosphorylation; the sequence is PVMPGR.

Belongs to the HPrK/P family. Homohexamer. The cofactor is Mg(2+).

It catalyses the reaction [HPr protein]-L-serine + ATP = [HPr protein]-O-phospho-L-serine + ADP + H(+). It carries out the reaction [HPr protein]-O-phospho-L-serine + phosphate + H(+) = [HPr protein]-L-serine + diphosphate. In terms of biological role, catalyzes the ATP- as well as the pyrophosphate-dependent phosphorylation of a specific serine residue in HPr, a phosphocarrier protein of the phosphoenolpyruvate-dependent sugar phosphotransferase system (PTS). HprK/P also catalyzes the pyrophosphate-producing, inorganic phosphate-dependent dephosphorylation (phosphorolysis) of seryl-phosphorylated HPr (P-Ser-HPr). This chain is HPr kinase/phosphorylase, found in Stenotrophomonas maltophilia (strain R551-3).